The chain runs to 331 residues: Fructose-1,6-bisphosphatase class 1 2 (331 aa).

Mg(2+) contacts are provided by E80, D98, L100, and D101. Residues 101-104 (DGSS) and N189 contribute to the substrate site. Residue E261 participates in Mg(2+) binding.

The protein belongs to the FBPase class 1 family. As to quaternary structure, homotetramer. Mg(2+) serves as cofactor.

It is found in the cytoplasm. It catalyses the reaction beta-D-fructose 1,6-bisphosphate + H2O = beta-D-fructose 6-phosphate + phosphate. It functions in the pathway carbohydrate biosynthesis; Calvin cycle. In Cereibacter sphaeroides (strain ATCC 17023 / DSM 158 / JCM 6121 / CCUG 31486 / LMG 2827 / NBRC 12203 / NCIMB 8253 / ATH 2.4.1.) (Rhodobacter sphaeroides), this protein is Fructose-1,6-bisphosphatase class 1 2.